The primary structure comprises 93 residues: N-myc protein (93 aa).

In terms of assembly, efficient DNA binding requires dimerization with another bHLH protein. Binds DNA as a heterodimer with MAX. In terms of tissue distribution, barely detectable in most tissues assayed.

It is found in the nucleus. In terms of biological role, may function as a transcription factor. The sequence is that of N-myc protein (mycn) from Danio rerio (Zebrafish).